The following is a 187-amino-acid chain: Large ribosomal subunit protein eL18x (187 aa).

Positions 150–187 (HFGPAPGVPHSNTKPYVRHKGRKFEKARGKRKSRGFKV) are disordered. Positions 165–187 (YVRHKGRKFEKARGKRKSRGFKV) are enriched in basic residues.

Belongs to the eukaryotic ribosomal protein eL18 family.

The sequence is that of Large ribosomal subunit protein eL18x (RPL18C) from Arabidopsis thaliana (Mouse-ear cress).